The primary structure comprises 108 residues: Acid stress chaperone HdeB (108 aa).

A signal peptide spans 1 to 29 (MNISSLRKAFIFMGAVAALSLVNAQSALA). Lysine 93 is subject to N6-acetyllysine.

It belongs to the HdeB family.

Its subcellular location is the periplasm. Its function is as follows. Required for optimal acid stress protection, which is important for survival of enteric bacteria in the acidic environment of the host stomach. Exhibits a chaperone-like activity at acidic pH by preventing the aggregation of many different periplasmic proteins. This chain is Acid stress chaperone HdeB, found in Escherichia coli O6:H1 (strain CFT073 / ATCC 700928 / UPEC).